The chain runs to 350 residues: S-adenosylmethionine:tRNA ribosyltransferase-isomerase (350 aa).

The protein belongs to the QueA family. In terms of assembly, monomer.

It localises to the cytoplasm. The enzyme catalyses 7-aminomethyl-7-carbaguanosine(34) in tRNA + S-adenosyl-L-methionine = epoxyqueuosine(34) in tRNA + adenine + L-methionine + 2 H(+). The protein operates within tRNA modification; tRNA-queuosine biosynthesis. Its function is as follows. Transfers and isomerizes the ribose moiety from AdoMet to the 7-aminomethyl group of 7-deazaguanine (preQ1-tRNA) to give epoxyqueuosine (oQ-tRNA). The protein is S-adenosylmethionine:tRNA ribosyltransferase-isomerase of Vibrio vulnificus (strain CMCP6).